An 898-amino-acid chain; its full sequence is Alanine--tRNA ligase (898 aa).

The Zn(2+) site is built by His564, His568, Cys682, and His686.

The protein belongs to the class-II aminoacyl-tRNA synthetase family. Zn(2+) serves as cofactor.

The protein resides in the cytoplasm. It carries out the reaction tRNA(Ala) + L-alanine + ATP = L-alanyl-tRNA(Ala) + AMP + diphosphate. Functionally, catalyzes the attachment of alanine to tRNA(Ala) in a two-step reaction: alanine is first activated by ATP to form Ala-AMP and then transferred to the acceptor end of tRNA(Ala). Also edits incorrectly charged Ser-tRNA(Ala) and Gly-tRNA(Ala) via its editing domain. The chain is Alanine--tRNA ligase from Beijerinckia indica subsp. indica (strain ATCC 9039 / DSM 1715 / NCIMB 8712).